Reading from the N-terminus, the 233-residue chain is Somatolactin (233 aa).

The N-terminal stretch at 1 to 24 is a signal peptide; sequence MNMMQVMQSVVWAVLLWPCLVSLG. Intrachain disulfides connect cysteine 29–cysteine 39, cysteine 89–cysteine 205, and cysteine 222–cysteine 230.

It belongs to the somatotropin/prolactin family. As to expression, pituitary gland.

It localises to the secreted. May be associated with ion regulation and reproduction. The protein is Somatolactin of Oncorhynchus keta (Chum salmon).